The sequence spans 1377 residues: Zinc finger MYM-type protein 2 (1377 aa).

Residues Lys-48, Lys-88, Lys-98, and Lys-104 each participate in a glycyl lysine isopeptide (Lys-Gly) (interchain with G-Cter in SUMO2) cross-link. Composition is skewed to polar residues over residues 85–115 (TSSK…SVSE) and 127–138 (TNQGQEKNSSNF). The interval 85-177 (TSSKNEELQG…GMGNSGITTE (93 aa)) is disordered. The span at 139–152 (IERRPPETKNRTND) shows a compositional bias: basic and acidic residues. A Glycyl lysine isopeptide (Lys-Gly) (interchain with G-Cter in SUMO2) cross-link involves residue Lys-147. Positions 153–164 (VDFSTSSFSRSK) are enriched in polar residues. Ser-159 carries the phosphoserine modification. Glycyl lysine isopeptide (Lys-Gly) (interchain with G-Cter in SUMO2) cross-links involve residues Lys-253 and Lys-297. The disordered stretch occupies residues 273 to 305 (NGESATHHNPDSWISQSASFPRNQKQPGVDSLS). The span at 284-298 (SWISQSASFPRNQKQ) shows a compositional bias: polar residues. Phosphoserine is present on Ser-305. Glycyl lysine isopeptide (Lys-Gly) (interchain with G-Cter in SUMO2) cross-links involve residues Lys-312, Lys-325, Lys-348, and Lys-366. The MYM-type 1 zinc finger occupies 327–363 (VKVTCANCKKPLQKGQTAYQRKGSAHLFCSTTCLSSF). The segment at 369–409 (PKKLCVMCKKDITTMKGTIVAQVDSSESFQEFCSTSCLSLY) adopts an MYM-type 2 zinc-finger fold. Residues Lys-417, Lys-441, Lys-491, Lys-503, Lys-513, Lys-529, and Lys-532 each participate in a glycyl lysine isopeptide (Lys-Gly) (interchain with G-Cter in SUMO2) cross-link. MYM-type zinc fingers lie at residues 421–456 (NKSR…FNRY) and 463–502 (IMNC…VSEY). The MYM-type 5 zinc finger occupies 533–570 (LTTCTGCRTQCRFFDMTQCIGPNGYMEPYCSTACMNSH). Residues Lys-576, Lys-603, Lys-649, Lys-658, Lys-688, Lys-700, and Lys-709 each participate in a glycyl lysine isopeptide (Lys-Gly) (interchain with G-Cter in SUMO2) cross-link. The MYM-type 6 zinc finger occupies 636-671 (QLKCNYCKNSFCSKPEILEWENKVHQFCSKTCSDDY). MYM-type zinc fingers lie at residues 723–758 (RCVT…CKKF) and 764–799 (KAAR…LLRF). Residues Lys-764, Lys-788, Lys-812, and Lys-829 each participate in a glycyl lysine isopeptide (Lys-Gly) (interchain with G-Cter in SUMO2) cross-link. Residues Ser-838 and Ser-958 each carry the phosphoserine modification. Disordered regions lie at residues 983–1002 (LLKN…PYEP) and 1028–1064 (VFGE…SDNS). Basic residues predominate over residues 1039–1050 (PRSKKKGAKRKA). The residue at position 1064 (Ser-1064) is a Phosphoserine. Phosphothreonine is present on Thr-1376.

Can form homodimers. May be a component of a BHC histone deacetylase complex that contains HDAC1, HDAC2, HMG20B/BRAF35, KDM1A, RCOR1/CoREST, PHF21A/BHC80, ZMYM2, ZNF217, ZMYM3, GSE1 and GTF2I. Interacts with FOXP1 and FOXP2.

The protein resides in the nucleus. Its function is as follows. Involved in the negative regulation of transcription. The polypeptide is Zinc finger MYM-type protein 2 (ZMYM2) (Homo sapiens (Human)).